Here is a 71-residue protein sequence, read N- to C-terminus: Brevinin-1SN1 (71 aa).

An N-terminal signal peptide occupies residues 1–22 (MFTMKKPLLLLFFLGTINLSLC). Positions 23–45 (EEERNADEEEKRDGDDEMDAEVE) are cleaved as a propeptide — removed in mature form. Cysteine 65 and cysteine 71 are disulfide-bonded.

This sequence belongs to the frog skin active peptide (FSAP) family. Brevinin subfamily. Expressed by the skin glands.

The protein localises to the secreted. Functionally, antimicrobial peptide. Active against some Gram-negative and a variety of Gram-positive bacterial strains. Active against fungus C.glabrata 090902 but not against C.albicans ATCC 10231. Shows hemolytic activity against human erythrocytes. The sequence is that of Brevinin-1SN1 from Sylvirana spinulosa (Fine-spined frog).